A 110-amino-acid polypeptide reads, in one-letter code: Ubiquitin-related modifier 1 (110 aa).

Glycine 110 bears the 1-thioglycine mark. A Glycyl lysine isopeptide (Gly-Lys) (interchain with K-? in acceptor proteins) cross-link involves residue glycine 110.

The protein belongs to the URM1 family. In terms of assembly, homodimer; homodimerization may provide an autoprotection to the highly active C-terminal residue before attacking its substrates. Forms a conjugate with the target protein AHP1. Post-translationally, C-terminal thiocarboxylation occurs in 2 steps, it is first acyl-adenylated (-COAMP) via the hesA/moeB/thiF part of UBA4, then thiocarboxylated (-COSH) via the rhodanese domain of UBA4.

Its subcellular location is the cytoplasm. The protein operates within tRNA modification; 5-methoxycarbonylmethyl-2-thiouridine-tRNA biosynthesis. Acts as a sulfur carrier required for 2-thiolation of mcm(5)S(2)U at tRNA wobble positions of cytosolic tRNA(Lys), tRNA(Glu) and tRNA(Gln). Serves as sulfur donor in tRNA 2-thiolation reaction by being thiocarboxylated (-COSH) at its C-terminus by the MOCS3 homolog UBA4. The sulfur is then transferred to tRNA to form 2-thiolation of mcm(5)S(2)U. Prior mcm(5) tRNA modification by the elongator complex is required for 2-thiolation. Also acts as a ubiquitin-like protein (UBL) that is covalently conjugated via an isopeptide bond to lysine residues of target proteins such as AHP1. Conjugation does not depend on the canonical cascade of E2 ubiquitin-conjugating enzymes and/or E3 ligases. The conjugation reaction requires a thiocarboxylated C-terminus of URM1 and a peroxidatic cysteine in the target protein, as the sulfur atom of the URM1 thiocarboxyl group is transferred to redox-active cysteine residues in the target protein. Oxidative stress specifically induces the formation of UBL-protein conjugates. Covalent modification with URM1 promotes the phase separation of a wide range of proteins into condensates like stress granules. The protein is Ubiquitin-related modifier 1 of Chaetomium thermophilum (strain DSM 1495 / CBS 144.50 / IMI 039719) (Thermochaetoides thermophila).